A 434-amino-acid chain; its full sequence is Methylenetetrahydrofolate--tRNA-(uracil-5-)-methyltransferase TrmFO (434 aa).

Residue 9–14 (GAGLAG) coordinates FAD.

The protein belongs to the MnmG family. TrmFO subfamily. It depends on FAD as a cofactor.

It localises to the cytoplasm. The catalysed reaction is uridine(54) in tRNA + (6R)-5,10-methylene-5,6,7,8-tetrahydrofolate + NADH + H(+) = 5-methyluridine(54) in tRNA + (6S)-5,6,7,8-tetrahydrofolate + NAD(+). It catalyses the reaction uridine(54) in tRNA + (6R)-5,10-methylene-5,6,7,8-tetrahydrofolate + NADPH + H(+) = 5-methyluridine(54) in tRNA + (6S)-5,6,7,8-tetrahydrofolate + NADP(+). Functionally, catalyzes the folate-dependent formation of 5-methyl-uridine at position 54 (M-5-U54) in all tRNAs. The polypeptide is Methylenetetrahydrofolate--tRNA-(uracil-5-)-methyltransferase TrmFO (Listeria innocua serovar 6a (strain ATCC BAA-680 / CLIP 11262)).